Here is a 161-residue protein sequence, read N- to C-terminus: MEFNEEFYVALGFVIFVAILLYYGVHNKLNAALDKRADRIREDLAHAVRLREEAAALLASFEKRKAEAEAEAEALVAQARTEAEMIAKEAHERLAEFVQRRTQQAENKIANAEAQAMAEVKAIAADAATKAAEILLTDAAKGAYGQKLIDQGIDGLKAAAH.

Residues 6-26 traverse the membrane as a helical segment; the sequence is EFYVALGFVIFVAILLYYGVH.

Belongs to the ATPase B chain family. In terms of assembly, F-type ATPases have 2 components, F(1) - the catalytic core - and F(0) - the membrane proton channel. F(1) has five subunits: alpha(3), beta(3), gamma(1), delta(1), epsilon(1). F(0) has three main subunits: a(1), b(2) and c(10-14). The alpha and beta chains form an alternating ring which encloses part of the gamma chain. F(1) is attached to F(0) by a central stalk formed by the gamma and epsilon chains, while a peripheral stalk is formed by the delta and b chains.

Its subcellular location is the cell inner membrane. Functionally, f(1)F(0) ATP synthase produces ATP from ADP in the presence of a proton or sodium gradient. F-type ATPases consist of two structural domains, F(1) containing the extramembraneous catalytic core and F(0) containing the membrane proton channel, linked together by a central stalk and a peripheral stalk. During catalysis, ATP synthesis in the catalytic domain of F(1) is coupled via a rotary mechanism of the central stalk subunits to proton translocation. Component of the F(0) channel, it forms part of the peripheral stalk, linking F(1) to F(0). This chain is ATP synthase subunit b 1, found in Beijerinckia indica subsp. indica (strain ATCC 9039 / DSM 1715 / NCIMB 8712).